We begin with the raw amino-acid sequence, 361 residues long: Holliday junction branch migration complex subunit RuvB (361 aa).

The segment at 1-183 (MAEPSLVAAG…FGFTGHLEFY (183 aa)) is large ATPase domain (RuvB-L). ATP is bound by residues leucine 22, arginine 23, glycine 64, lysine 67, threonine 68, threonine 69, 130-132 (EDF), arginine 173, tyrosine 183, and arginine 220. Threonine 68 is a Mg(2+) binding site. The interval 184-254 (SVPELELVLR…SASAALDMYE (71 aa)) is small ATPAse domain (RuvB-S). The tract at residues 257–361 (KKGLDRLDRS…VTGEWAPESQ (105 aa)) is head domain (RuvB-H). Residues arginine 312 and arginine 317 each contribute to the DNA site.

The protein belongs to the RuvB family. As to quaternary structure, homohexamer. Forms an RuvA(8)-RuvB(12)-Holliday junction (HJ) complex. HJ DNA is sandwiched between 2 RuvA tetramers; dsDNA enters through RuvA and exits via RuvB. An RuvB hexamer assembles on each DNA strand where it exits the tetramer. Each RuvB hexamer is contacted by two RuvA subunits (via domain III) on 2 adjacent RuvB subunits; this complex drives branch migration. In the full resolvosome a probable DNA-RuvA(4)-RuvB(12)-RuvC(2) complex forms which resolves the HJ.

The protein resides in the cytoplasm. It carries out the reaction ATP + H2O = ADP + phosphate + H(+). Functionally, the RuvA-RuvB-RuvC complex processes Holliday junction (HJ) DNA during genetic recombination and DNA repair, while the RuvA-RuvB complex plays an important role in the rescue of blocked DNA replication forks via replication fork reversal (RFR). RuvA specifically binds to HJ cruciform DNA, conferring on it an open structure. The RuvB hexamer acts as an ATP-dependent pump, pulling dsDNA into and through the RuvAB complex. RuvB forms 2 homohexamers on either side of HJ DNA bound by 1 or 2 RuvA tetramers; 4 subunits per hexamer contact DNA at a time. Coordinated motions by a converter formed by DNA-disengaged RuvB subunits stimulates ATP hydrolysis and nucleotide exchange. Immobilization of the converter enables RuvB to convert the ATP-contained energy into a lever motion, pulling 2 nucleotides of DNA out of the RuvA tetramer per ATP hydrolyzed, thus driving DNA branch migration. The RuvB motors rotate together with the DNA substrate, which together with the progressing nucleotide cycle form the mechanistic basis for DNA recombination by continuous HJ branch migration. Branch migration allows RuvC to scan DNA until it finds its consensus sequence, where it cleaves and resolves cruciform DNA. This is Holliday junction branch migration complex subunit RuvB from Pseudarthrobacter chlorophenolicus (strain ATCC 700700 / DSM 12829 / CIP 107037 / JCM 12360 / KCTC 9906 / NCIMB 13794 / A6) (Arthrobacter chlorophenolicus).